Consider the following 141-residue polypeptide: MSRTIMAFDFGTKSIGSAIGQEITGTASPLKAFKANDGIPNWDDIEKQIKEWQPDLLVVGLPTDLHGKDLETITPRAKKFAKRLQGRYGLPVELHDERLSTSEARAELFSMGGYKALSKGNIDCQSAVVILESWFEALWGE.

The protein belongs to the YqgF nuclease family.

It localises to the cytoplasm. Functionally, could be a nuclease involved in processing of the 5'-end of pre-16S rRNA. This Vibrio parahaemolyticus serotype O3:K6 (strain RIMD 2210633) protein is Putative pre-16S rRNA nuclease.